A 420-amino-acid chain; its full sequence is Zinc finger and BTB domain-containing protein 42 (420 aa).

The BTB domain occupies 24–92 (CDCTVLVGDA…MYEGRLDLHN (69 aa)). Disordered stretches follow at residues 127-204 (TRTL…HPPC) and 222-247 (VKAEQDSFSEQDSSSPQSADRSPPPV). Low complexity predominate over residues 227-241 (DSFSEQDSSSPQSAD). 4 C2H2-type zinc fingers span residues 292 to 314 (CICPLCCKLFPSTHALQLHLSAH), 332 to 354 (PTCPLCSKTFSCTYTLKRHERTH), 360 to 382 (YTCVQCGKSFQYSHNLSRHAVVH), and 388 to 411 (HACRWCERRFTQSGDLYRHVRKFH).

Belongs to the krueppel C2H2-type zinc-finger protein family. ZBTB18 subfamily. In terms of tissue distribution, highly expressed in skeletal muscle and ovary (at protein level). Low expression in brain, lung, spleen, liver and heart (at protein level). Not detected in kidney and intestines (at protein level). Also observed in testis and, at lower levels, in stomach and nervous system.

It is found in the cytoplasm. The protein localises to the nucleus. It localises to the nucleoplasm. Transcriptional repressor. Specifically binds DNA and probably acts by recruiting chromatin remodeling multiprotein complexes. The chain is Zinc finger and BTB domain-containing protein 42 (Zbtb42) from Mus musculus (Mouse).